A 298-amino-acid chain; its full sequence is Max-like protein X (298 aa).

A disordered region spans residues 1 to 63 (MTEPGASPED…PRGCREDSSH (63 aa)). Phosphoserine is present on Ser-7. Positions 28–37 (GRARARRGAG) are enriched in basic residues. Residues Ser-45, Ser-48, Ser-74, Ser-77, and Ser-98 each carry the phosphoserine modification. A disordered region spans residues 91-145 (SVVSRANSIGSTSASSVPNTDDEDSDYHQEAYKESYKDRRRRAHTQAEQKRRDAI). A compositionally biased stretch (polar residues) spans 94–109 (SRANSIGSTSASSVPN). Composition is skewed to basic and acidic residues over residues 116 to 127 (DYHQEAYKESYK) and 135 to 145 (TQAEQKRRDAI). The 59-residue stretch at 129 to 187 (RRRRAHTQAEQKRRDAIKRGYDDLQTIVPTCQQQDFSIGSQKLSKAIVLQKTIDYIQFL) folds into the bHLH domain. The leucine-zipper stretch occupies residues 140-160 (KRRDAIKRGYDDLQTIVPTCQ).

Efficient DNA binding requires dimerization with another bHLH protein. Binds DNA as a heterodimer with MAD1, MAD4, MNT, WBSCR14 and MLXIP. Can also bind DNA as a homodimer. Expressed in all tissues tested, including spleen, thymus, prostate, ovary, intestine, colon, peripheral blood leukocyte, heart, liver, skeletal muscle and kidney. Lower levels of expression in testis, brain, placenta and lung.

Its subcellular location is the cytoplasm. The protein localises to the nucleus. Functionally, transcription regulator. Forms a sequence-specific DNA-binding protein complex with MAD1, MAD4, MNT, WBSCR14 and MLXIP which recognizes the core sequence 5'-CACGTG-3'. The TCFL4-MAD1, TCFL4-MAD4, TCFL4-WBSCR14 complexes are transcriptional repressors. Plays a role in transcriptional activation of glycolytic target genes. Involved in glucose-responsive gene regulation. The protein is Max-like protein X (MLX) of Homo sapiens (Human).